The following is a 298-amino-acid chain: UDP-N-acetylenolpyruvoylglucosamine reductase (298 aa).

One can recognise an FAD-binding PCMH-type domain in the interval 26 to 191; sequence KTGGPADWLA…LDATFALEPG (166 aa). Residue Arg-170 is part of the active site. The active-site Proton donor is Ser-220. Glu-290 is an active-site residue.

The protein belongs to the MurB family. FAD is required as a cofactor.

It localises to the cytoplasm. It catalyses the reaction UDP-N-acetyl-alpha-D-muramate + NADP(+) = UDP-N-acetyl-3-O-(1-carboxyvinyl)-alpha-D-glucosamine + NADPH + H(+). It functions in the pathway cell wall biogenesis; peptidoglycan biosynthesis. In terms of biological role, cell wall formation. The chain is UDP-N-acetylenolpyruvoylglucosamine reductase from Limosilactobacillus reuteri subsp. reuteri (strain JCM 1112) (Lactobacillus reuteri).